The sequence spans 379 residues: Glutamate 5-kinase (379 aa).

K15 serves as a coordination point for ATP. Substrate contacts are provided by S56, D143, and N155. 175–176 lines the ATP pocket; sequence SD. Positions 281 to 358 constitute a PUA domain; the sequence is RGTLAIDAGA…SDAAQLLGVR (78 aa).

It belongs to the glutamate 5-kinase family.

Its subcellular location is the cytoplasm. It catalyses the reaction L-glutamate + ATP = L-glutamyl 5-phosphate + ADP. It functions in the pathway amino-acid biosynthesis; L-proline biosynthesis; L-glutamate 5-semialdehyde from L-glutamate: step 1/2. Functionally, catalyzes the transfer of a phosphate group to glutamate to form L-glutamate 5-phosphate. This Nitrobacter winogradskyi (strain ATCC 25391 / DSM 10237 / CIP 104748 / NCIMB 11846 / Nb-255) protein is Glutamate 5-kinase.